The primary structure comprises 427 residues: Serine--tRNA ligase (427 aa).

L-serine is bound at residue 229-231; it reads TAE. Residue 260–262 participates in ATP binding; it reads RSE. Position 283 (Glu283) interacts with L-serine. An ATP-binding site is contributed by 347–350; the sequence is EISS. Ser383 is a binding site for L-serine.

Belongs to the class-II aminoacyl-tRNA synthetase family. Type-1 seryl-tRNA synthetase subfamily. In terms of assembly, homodimer. The tRNA molecule binds across the dimer.

Its subcellular location is the cytoplasm. It carries out the reaction tRNA(Ser) + L-serine + ATP = L-seryl-tRNA(Ser) + AMP + diphosphate + H(+). The catalysed reaction is tRNA(Sec) + L-serine + ATP = L-seryl-tRNA(Sec) + AMP + diphosphate + H(+). Its pathway is aminoacyl-tRNA biosynthesis; selenocysteinyl-tRNA(Sec) biosynthesis; L-seryl-tRNA(Sec) from L-serine and tRNA(Sec): step 1/1. Its function is as follows. Catalyzes the attachment of serine to tRNA(Ser). Is also able to aminoacylate tRNA(Sec) with serine, to form the misacylated tRNA L-seryl-tRNA(Sec), which will be further converted into selenocysteinyl-tRNA(Sec). This Oleidesulfovibrio alaskensis (strain ATCC BAA-1058 / DSM 17464 / G20) (Desulfovibrio alaskensis) protein is Serine--tRNA ligase.